The following is a 380-amino-acid chain: N5-carboxyaminoimidazole ribonucleotide synthase (380 aa).

ATP is bound by residues Arg108, Lys148, Gly153 to Gln159, Glu183 to Val186, Glu191, His214, and Asn268 to Glu269. The region spanning Lys112–Cys298 is the ATP-grasp domain.

This sequence belongs to the PurK/PurT family. In terms of assembly, homodimer.

The enzyme catalyses 5-amino-1-(5-phospho-beta-D-ribosyl)imidazole + hydrogencarbonate + ATP = 5-carboxyamino-1-(5-phospho-D-ribosyl)imidazole + ADP + phosphate + 2 H(+). It participates in purine metabolism; IMP biosynthesis via de novo pathway; 5-amino-1-(5-phospho-D-ribosyl)imidazole-4-carboxylate from 5-amino-1-(5-phospho-D-ribosyl)imidazole (N5-CAIR route): step 1/2. Its function is as follows. Catalyzes the ATP-dependent conversion of 5-aminoimidazole ribonucleotide (AIR) and HCO(3)(-) to N5-carboxyaminoimidazole ribonucleotide (N5-CAIR). The sequence is that of N5-carboxyaminoimidazole ribonucleotide synthase from Bacillus subtilis (strain 168).